The following is a 334-amino-acid chain: Ornithine carbamoyltransferase subunit I (334 aa).

Carbamoyl phosphate contacts are provided by residues 56–59 (STRT), Q83, R107, and 134–137 (HPTQ). L-ornithine-binding positions include N168, D232, and 236–237 (SM). A Zn(2+)-binding site is contributed by C274. Carbamoyl phosphate-binding positions include 274–275 (CL) and R320.

It belongs to the aspartate/ornithine carbamoyltransferase superfamily. OTCase family. In terms of assembly, in E.coli strain K12, trimer of identical or non-identical chains are composed of ArgI (I) and/or ArgF (F). The trimer has the following composition: FFI, FFF, FII, III. E.coli strains B and W, which are known to contain only ArgI, produce only a trimer of identical chains (III).

It localises to the cytoplasm. It catalyses the reaction carbamoyl phosphate + L-ornithine = L-citrulline + phosphate + H(+). Its pathway is amino-acid biosynthesis; L-arginine biosynthesis; L-arginine from L-ornithine and carbamoyl phosphate: step 1/3. With respect to regulation, reversely inhibited by N-(N-Sulfodiaminophosphinyl)-L-ornithine. Zinc is an allosteric regulator of the substrate-bound enzyme and a competitive inhibitor of the free enzyme. Its function is as follows. Reversibly catalyzes the transfer of the carbamoyl group from carbamoyl phosphate (CP) to the N(epsilon) atom of ornithine (ORN) to produce L-citrulline, which is a substrate for argininosuccinate synthetase, the enzyme involved in the final step in arginine biosynthesis. The chain is Ornithine carbamoyltransferase subunit I from Escherichia coli (strain K12).